The sequence spans 683 residues: Boron transporter 4 (683 aa).

Residues 1–38 (MEEERVDSSKRLFRGIVADLRGRALCYKEDWVAGLRSG) lie on the Cytoplasmic side of the membrane. Residues 39–59 (FGILAPTTYIFFASALPVIAF) traverse the membrane as a helical segment. Over 60-80 (GEQLSRDTEGALSTVETLAST) the chain is Extracellular. The helical transmembrane segment at 81-101 (ALCGVIHSILGGQPLLILGVA) threads the bilayer. At 102-126 (EPTVLMYVYLYNFAIGRPELGKQLY) the chain is on the cytoplasmic side. Residues 127 to 147 (LAWAAWVCVWTALLLFVMAIL) form a helical membrane-spanning segment. Topologically, residues 148–160 (NTADIINRFTRVA) are extracellular. A helical transmembrane segment spans residues 161 to 181 (GELFGMLISVLFIQQAIKGMV). Over 182–200 (SEFGMPKDEDSKLEKYKFE) the chain is Cytoplasmic. A helical transmembrane segment spans residues 201 to 221 (WLYTNGLLGLIFTFGLLYTAL). Residues 222 to 238 (KSRKARSWRYGTGWYRS) lie on the Extracellular side of the membrane. The chain crosses the membrane as a helical span at residues 239–259 (FIADYGVPLMVVVWTALSFST). Residues 260–294 (PSKLPSGVPRRLFSPLPWDSPSLSHWTVIKDMGKV) are Cytoplasmic-facing. The chain crosses the membrane as a helical span at residues 295-315 (SPGYIFAAFIPALMIAGLYFF). Residues 316–335 (DHSVASQLAQQKEFNLKKPS) are Extracellular-facing. Residues 336–356 (AYHYDILLLGFMTLICGLLGL) form a helical membrane-spanning segment. The Cytoplasmic portion of the chain corresponds to 357 to 477 (PPSNGVLPQS…EQRVSNLLQS (121 aa)). Residues 478–498 (LLVAGAVLAMPAIKLIPTSIL) traverse the membrane as a helical segment. At 499 to 565 (WGYFAYMAID…QIFYFGLCYG (67 aa)) the chain is on the extracellular side. The chain crosses the membrane as a helical span at residues 566 to 586 (VTWIPVAGIMFPVPFFLLIAI). Over 587 to 683 (RQYILPKLFN…GDGDMSTTRE (97 aa)) the chain is Cytoplasmic. 2 disordered regions span residues 617 to 638 (NPLELSFRSNDSKRGVQEGDAE) and 661 to 683 (KGNQIYPKEKVKAGDGDMSTTRE).

The protein belongs to the anion exchanger (TC 2.A.31.3) family. As to expression, expressed in the distal sides of epidermal cells in the elongation zone of roots.

It localises to the membrane. Its function is as follows. Efflux-type boron transporter polarly localized in roots. Boron is essential for maintaining the integrity of plants cell walls. In Arabidopsis thaliana (Mouse-ear cress), this protein is Boron transporter 4 (BOR4).